The primary structure comprises 394 residues: Elongation factor Tu (394 aa).

Residues 10–205 enclose the tr-type G domain; that stretch reads KPHVNIGTIG…VDTWIPLPPR (196 aa). The tract at residues 19 to 26 is G1; it reads GHVDHGKT. Position 19–26 (19–26) interacts with GTP; the sequence is GHVDHGKT. Thr-26 lines the Mg(2+) pocket. Residues 60–64 are G2; it reads GITIN. The interval 81–84 is G3; sequence DCPG. Residues 81–85 and 136–139 each bind GTP; these read DCPGH and NKCD. Residues 136–139 are G4; sequence NKCD. The tract at residues 174–176 is G5; sequence SAL.

It belongs to the TRAFAC class translation factor GTPase superfamily. Classic translation factor GTPase family. EF-Tu/EF-1A subfamily. As to quaternary structure, monomer.

The protein resides in the cytoplasm. The enzyme catalyses GTP + H2O = GDP + phosphate + H(+). In terms of biological role, GTP hydrolase that promotes the GTP-dependent binding of aminoacyl-tRNA to the A-site of ribosomes during protein biosynthesis. In Bacteroides fragilis (strain ATCC 25285 / DSM 2151 / CCUG 4856 / JCM 11019 / LMG 10263 / NCTC 9343 / Onslow / VPI 2553 / EN-2), this protein is Elongation factor Tu.